The primary structure comprises 357 residues: Queuosine-tRNA galactosyltransferase (357 aa).

The protein belongs to the glycosyltransferase 2 family.

The protein localises to the cytoplasm. It catalyses the reaction queuosine(34) in tRNA(Tyr) + UDP-alpha-D-galactose = O-5''-beta-D-galactosylqueuosine(34) in tRNA(Tyr) + UDP + H(+). Functionally, glycosyltransferase that specifically catalyzes galactosylation of cytoplasmic tRNA(Tyr) modified with queuosine at position 34 (queuosine(34)). Galactosylates the cyclopentene hydroxyl group of queuosine(34) in tRNA(Tyr) to form galactosyl-queuosine(34). Mannosylation of queuosine(34) in tRNA(Tyr) is required to slow-down elongation at cognate codons UAC and suppress stop codon readthrough, thereby regulating protein translation. This chain is Queuosine-tRNA galactosyltransferase, found in Rattus norvegicus (Rat).